The following is a 190-amino-acid chain: GTP cyclohydrolase 1 (190 aa).

Zn(2+) contacts are provided by Cys-79, His-82, and Cys-151.

Belongs to the GTP cyclohydrolase I family. As to quaternary structure, toroid-shaped homodecamer, composed of two pentamers of five dimers.

The enzyme catalyses GTP + H2O = 7,8-dihydroneopterin 3'-triphosphate + formate + H(+). The protein operates within cofactor biosynthesis; 7,8-dihydroneopterin triphosphate biosynthesis; 7,8-dihydroneopterin triphosphate from GTP: step 1/1. This chain is GTP cyclohydrolase 1, found in Clostridioides difficile (strain 630) (Peptoclostridium difficile).